The sequence spans 294 residues: Probable WRKY transcription factor 70 (294 aa).

Positions 72–94 (SQNASCDNDGKFEDSGDSRKRLG) are disordered. Residues 79 to 91 (NDGKFEDSGDSRK) are compositionally biased toward basic and acidic residues. The Nuclear localization signal motif lies at 90-97 (RKRLGPVK). Positions 114-182 (IESTILEDAF…YIGNHTCNTN (69 aa)) form a DNA-binding region, WRKY. A disordered region spans residues 201–229 (SEDHKSPSLSTSMKEEDNPHRHHGSSTEN).

The protein belongs to the WRKY group III family. As to quaternary structure, interacts with WRKY30. Binds to BZR2/BES1 to cooperatively regulate the expression of target genes. Binds to unmodified (i.e. not sumoylated) NPR1. Post-translationally, phosphorylated and destabilized by ASK7/BIN2. In terms of tissue distribution, expressed in leaves and flowers.

The protein resides in the nucleus. Functionally, transcription factor involved in senescence, biotic and abiotic stress responses by modulating various phytohormones signaling pathways. Interacts specifically with the W box (5'-(T)TGAC[CT]-3'), a frequently occurring elicitor-responsive cis-acting element. Binds to the 5'-[CT]GACTTTT-3' motif in promoters of target genes to induce their expression. Binding to the W-box element of PR-1 promoter is mediated by not-sumoylated NPR1 in the absence of salicylic acid. Plays an important but not indispensable role in jasmonate and salicylic acid signaling. Positively regulates the salicylic acid (SA)-mediated signal pathway, but negatively the jasmonic acid (JA)-mediated signal pathway, thus determining the balance between these mutually antagonistic pathways. Together with WRKY46, WRKY53 and WRKY54, prevents defense response to the necrotrophic pathogens P.carotovorum and B.cinerea, but promotes defense responses (including SA-induced pathogenesis-related (PR) genes expression) against biotrophic/hemibiotrophic SA-monitored pathogens (e.g. P.syringae, E.carotovora subsp. carotovora SCC3193 and E.cichoracearum), probably by regulating negatively the JA/ET and positively the SA signaling pathways. Contributes to the suppression of jasmonic acid (MeJA)-induced expression of JA-responsive genes (e.g. PDF1.2). Promotes susceptibility to JA-monitored pathogens (e.g. A.brassicicola), probably by facilitating SA-controlled suppression of JA-mediated defense. Represses the biosynthesis of the phytoalexin camalexin and indol-3-ylmethyl glucosinolate (IGS). Represses both SA and JA/ethylene (ET) mediated defense marker genes expression. Negative regulator of SA biosynthesis. Negative regulator of EDS1-dependent defense against E.amylovora. Required for RPP4-mediated disease resistance and basal defense against H.parasitica, probably via late up-regulation (LURP) of resistance genes (e.g. CML10/CaBP22 and LURP1). Probably involved in defense responses toward insects (e.g. P.xylostella and B.brassicae). Together with WRKY54, negative regulator of developmental senescence, probably via the regulation of several senescence-associated markers genes. Together with WRKY46 and WRKY54, promotes brassinosteroid (BR)-regulated plant growth but prevent drought response by modulating gene expression. In collaboration with WRKY54, prevents stomatal closure and, consequently, osmotic stress tolerance. Regulates rhizobacterium B.cereus AR156-induced systemic resistance (ISR) to P.syringae pv. tomato DC3000. This Arabidopsis thaliana (Mouse-ear cress) protein is Probable WRKY transcription factor 70.